The following is a 387-amino-acid chain: Chaperone protein DnaJ (387 aa).

Residues 6 to 71 (DYYEILGVPR…EKRRKYDQFG (66 aa)) form the J domain. The CR-type zinc finger occupies 146 to 228 (GCEKEIPIYR…CGGTGTVRRQ (83 aa)). Residues Cys-159, Cys-162, Cys-176, Cys-179, Cys-202, Cys-205, Cys-216, and Cys-219 each contribute to the Zn(2+) site. 4 CXXCXGXG motif repeats span residues 159 to 166 (CSVCGGSG), 176 to 183 (CQKCGGTG), 202 to 209 (CDACGGVG), and 216 to 223 (CRECGGTG).

It belongs to the DnaJ family. As to quaternary structure, homodimer. The cofactor is Zn(2+).

It localises to the cytoplasm. In terms of biological role, participates actively in the response to hyperosmotic and heat shock by preventing the aggregation of stress-denatured proteins and by disaggregating proteins, also in an autonomous, DnaK-independent fashion. Unfolded proteins bind initially to DnaJ; upon interaction with the DnaJ-bound protein, DnaK hydrolyzes its bound ATP, resulting in the formation of a stable complex. GrpE releases ADP from DnaK; ATP binding to DnaK triggers the release of the substrate protein, thus completing the reaction cycle. Several rounds of ATP-dependent interactions between DnaJ, DnaK and GrpE are required for fully efficient folding. Also involved, together with DnaK and GrpE, in the DNA replication of plasmids through activation of initiation proteins. This is Chaperone protein DnaJ from Caldicellulosiruptor saccharolyticus (strain ATCC 43494 / DSM 8903 / Tp8T 6331).